The primary structure comprises 130 residues: Histone H2A type 1 (130 aa).

Residues 1–22 (MSGRGKQGGKARAKAKTRSSRA) are disordered. S2 carries the post-translational modification N-acetylserine. The residue at position 2 (S2) is a Phosphoserine; by RPS6KA5. R4 is modified (citrulline; alternate). Position 4 is a symmetric dimethylarginine; by PRMT5; alternate (R4). The residue at position 6 (K6) is an N6-(2-hydroxyisobutyryl)lysine. Over residues 7-19 (QGGKARAKAKTRS) the composition is skewed to basic residues. K10 is modified (N6-(2-hydroxyisobutyryl)lysine; alternate). K10 bears the N6-lactoyllysine; alternate mark. K10 carries the post-translational modification N6-succinyllysine; alternate. Glycyl lysine isopeptide (Lys-Gly) (interchain with G-Cter in ubiquitin) cross-links involve residues K14 and K16. Position 37 is an N6-(2-hydroxyisobutyryl)lysine; alternate (K37). K37 carries the post-translational modification N6-(beta-hydroxybutyryl)lysine; alternate. An N6-crotonyllysine; alternate modification is found at K37. 2 positions are modified to N6-(2-hydroxyisobutyryl)lysine: K75 and K76. At K96 the chain carries N6-(2-hydroxyisobutyryl)lysine; alternate. At K96 the chain carries N6-succinyllysine; alternate. K96 carries the post-translational modification N6-glutaryllysine; alternate. An N6-glutaryllysine modification is found at K100. The residue at position 105 (Q105) is an N5-methylglutamine. K119 carries the N6-(2-hydroxyisobutyryl)lysine; alternate modification. K119 and K120 each carry N6-crotonyllysine; alternate. Residues K119 and K120 each carry the N6-glutaryllysine; alternate modification. K120 participates in a covalent cross-link: Glycyl lysine isopeptide (Lys-Gly) (interchain with G-Cter in ubiquitin); alternate. Phosphothreonine; by DCAF1 is present on T121. Position 126 is an N6-crotonyllysine; alternate (K126). An N6-glutaryllysine; alternate modification is found at K126.

Belongs to the histone H2A family. The nucleosome is a histone octamer containing two molecules each of H2A, H2B, H3 and H4 assembled in one H3-H4 heterotetramer and two H2A-H2B heterodimers. The octamer wraps approximately 147 bp of DNA. Interacts with VRK1; the interaction is mediated by the nucleosome acidic patch, a cluster of negatively charged residues of H2A and H2B forming a cleft within the nucleosome core. Deiminated on Arg-4 in granulocytes upon calcium entry. Post-translationally, monoubiquitination of Lys-120 (H2AK119Ub) by RING1, TRIM37 and RNF2/RING2 complex gives a specific tag for epigenetic transcriptional repression and participates in X chromosome inactivation of female mammals. It is involved in the initiation of both imprinted and random X inactivation. Ubiquitinated H2A is enriched in inactive X chromosome chromatin. Ubiquitination of H2A functions downstream of methylation of 'Lys-27' of histone H3 (H3K27me). H2AK119Ub by RNF2/RING2 can also be induced by ultraviolet and may be involved in DNA repair. Following DNA double-strand breaks (DSBs), it is ubiquitinated through 'Lys-63' linkage of ubiquitin moieties by the E2 ligase UBE2N and the E3 ligases RNF8 and RNF168, leading to the recruitment of repair proteins to sites of DNA damage. Ubiquitination at Lys-14 and Lys-16 (H2AK13Ub and H2AK15Ub, respectively) in response to DNA damage is initiated by RNF168 that mediates monoubiquitination at these 2 sites, and 'Lys-63'-linked ubiquitin are then conjugated to monoubiquitin; RNF8 is able to extend 'Lys-63'-linked ubiquitin chains in vitro. H2AK119Ub and ionizing radiation-induced 'Lys-63'-linked ubiquitination (H2AK13Ub and H2AK15Ub) are distinct events. In terms of processing, phosphorylation on Ser-2 (H2AS1ph) is enhanced during mitosis. Phosphorylation on Ser-2 by RPS6KA5/MSK1 directly represses transcription. Acetylation of H3 inhibits Ser-2 phosphorylation by RPS6KA5/MSK1. Phosphorylation at Thr-121 (H2AT120ph) by DCAF1 is present in the regulatory region of many tumor suppresor genes and down-regulates their transcription. Symmetric dimethylation on Arg-4 by the PRDM1/PRMT5 complex may play a crucial role in the germ-cell lineage. Post-translationally, glutamine methylation at Gln-105 (H2AQ104me) by FBL is specifically dedicated to polymerase I. It is present at 35S ribosomal DNA locus and impairs binding of the FACT complex. In terms of processing, crotonylation (Kcr) is specifically present in male germ cells and marks testis-specific genes in post-meiotic cells, including X-linked genes that escape sex chromosome inactivation in haploid cells. Crotonylation marks active promoters and enhancers and confers resistance to transcriptional repressors. It is also associated with post-meiotically activated genes on autosomes. Lactylated in macrophages by EP300/P300 by using lactoyl-CoA directly derived from endogenous or exogenous lactate, leading to stimulates gene transcription.

The protein localises to the nucleus. Its subcellular location is the chromosome. Functionally, core component of nucleosome. Nucleosomes wrap and compact DNA into chromatin, limiting DNA accessibility to the cellular machineries which require DNA as a template. Histones thereby play a central role in transcription regulation, DNA repair, DNA replication and chromosomal stability. DNA accessibility is regulated via a complex set of post-translational modifications of histones, also called histone code, and nucleosome remodeling. The protein is Histone H2A type 1 of Bos taurus (Bovine).